Here is a 1032-residue protein sequence, read N- to C-terminus: Kinesin heavy chain isoform 5A (1032 aa).

A2 is subject to N-acetylalanine. Residues 9-327 (SIKVLCRFRP…LMFGQRAKTI (319 aa)) enclose the Kinesin motor domain. Position 86–93 (86–93 (GQTSSGKT)) interacts with ATP. The tract at residues 174-315 (VSSPEEILDV…PSSYNDAETK (142 aa)) is microtubule-binding. Residues 271–361 (EGTKSYVPYR…KTKAQKETIA (91 aa)) form a necessary for interaction with ZFYVE27 region. A coiled-coil region spans residues 331 to 906 (ASVNLELTAE…VDRIKEAVRY (576 aa)). The segment at 353 to 1032 (TKAQKETIAK…FPLHQETAAS (680 aa)) is interaction with BICD2. T397 carries the post-translational modification Phosphothreonine. Disordered regions lie at residues 906–939 (YKSS…YGTR) and 978–1010 (SGAT…RSDL). The tract at residues 907-1032 (KSSGKRGHSA…FPLHQETAAS (126 aa)) is globular. Low complexity predominate over residues 978-989 (SGATSSGGPLAS). Residues 991–1003 (QKANMDNGNATDI) are compositionally biased toward polar residues.

This sequence belongs to the TRAFAC class myosin-kinesin ATPase superfamily. Kinesin family. Kinesin subfamily. Oligomer composed of two heavy chains and two light chains. Interacts with GRIP1. Interacts with FMR1 (via C-terminus); this interaction is increased in a mGluR-dependent manner. Interacts with ZFYVE27. Interacts with VAPA, VAPB, SURF4, RAB11A (GDP-bound form), RAB11B (GDP-bound form) and RTN3 in a ZFYVE27-dependent manner. Interacts with BORCS5. Interacts with BICD2. Interacts with DTNB. Distributed throughout the CNS but is highly enriched in subsets of neurons.

The protein localises to the cytoplasm. It localises to the perinuclear region. Its subcellular location is the cytoskeleton. It is found in the perikaryon. It carries out the reaction ATP + H2O + a kinesin associated with a microtubule at position (n) = ADP + phosphate a kinesin associated with a microtubule at position (n+1, toward the plus end).. Functionally, microtubule-dependent motor required for slow axonal transport of neurofilament proteins (NFH, NFM and NFL). Can induce formation of neurite-like membrane protrusions in non-neuronal cells in a ZFYVE27-dependent manner. The ZFYVE27-KIF5A complex contributes to the vesicular transport of VAPA, VAPB, SURF4, RAB11A, RAB11B and RTN3 proteins in neurons. Required for anterograde axonal transportation of MAPK8IP3/JIP3 which is essential for MAPK8IP3/JIP3 function in axon elongation. This is Kinesin heavy chain isoform 5A from Homo sapiens (Human).